A 122-amino-acid polypeptide reads, in one-letter code: MIQMQTTLDVADNSGARSVQCIKVLGGSHRRYANIGDIIKVTVKEAIPRGKVKKGDVVNAVVVRTRKGVRRQDGSVIRFDRNAAVLLNNNQQPIGTRIFGPVTRELRSEQFMKIISLAPEVL.

This sequence belongs to the universal ribosomal protein uL14 family. Part of the 50S ribosomal subunit. Forms a cluster with proteins L3 and L19. In the 70S ribosome, L14 and L19 interact and together make contacts with the 16S rRNA in bridges B5 and B8.

Functionally, binds to 23S rRNA. Forms part of two intersubunit bridges in the 70S ribosome. The polypeptide is Large ribosomal subunit protein uL14 (Idiomarina loihiensis (strain ATCC BAA-735 / DSM 15497 / L2-TR)).